Reading from the N-terminus, the 415-residue chain is Serine hydroxymethyltransferase (415 aa).

(6S)-5,6,7,8-tetrahydrofolate-binding positions include L117 and 121-123 (GHL). At K225 the chain carries N6-(pyridoxal phosphate)lysine. 349 to 351 (SPF) serves as a coordination point for (6S)-5,6,7,8-tetrahydrofolate.

It belongs to the SHMT family. As to quaternary structure, homodimer. Requires pyridoxal 5'-phosphate as cofactor.

The protein resides in the cytoplasm. The catalysed reaction is (6R)-5,10-methylene-5,6,7,8-tetrahydrofolate + glycine + H2O = (6S)-5,6,7,8-tetrahydrofolate + L-serine. The protein operates within one-carbon metabolism; tetrahydrofolate interconversion. Its pathway is amino-acid biosynthesis; glycine biosynthesis; glycine from L-serine: step 1/1. Catalyzes the reversible interconversion of serine and glycine with tetrahydrofolate (THF) serving as the one-carbon carrier. This reaction serves as the major source of one-carbon groups required for the biosynthesis of purines, thymidylate, methionine, and other important biomolecules. Also exhibits THF-independent aldolase activity toward beta-hydroxyamino acids, producing glycine and aldehydes, via a retro-aldol mechanism. This Nitratiruptor sp. (strain SB155-2) protein is Serine hydroxymethyltransferase.